We begin with the raw amino-acid sequence, 247 residues long: Phosphoribosylaminoimidazole-succinocarboxamide synthase (247 aa).

Belongs to the SAICAR synthetase family.

The catalysed reaction is 5-amino-1-(5-phospho-D-ribosyl)imidazole-4-carboxylate + L-aspartate + ATP = (2S)-2-[5-amino-1-(5-phospho-beta-D-ribosyl)imidazole-4-carboxamido]succinate + ADP + phosphate + 2 H(+). Its pathway is purine metabolism; IMP biosynthesis via de novo pathway; 5-amino-1-(5-phospho-D-ribosyl)imidazole-4-carboxamide from 5-amino-1-(5-phospho-D-ribosyl)imidazole-4-carboxylate: step 1/2. In Synechococcus sp. (strain JA-2-3B'a(2-13)) (Cyanobacteria bacterium Yellowstone B-Prime), this protein is Phosphoribosylaminoimidazole-succinocarboxamide synthase.